The following is a 587-amino-acid chain: Probable phosphoribomutase (587 aa).

Residues T49, R53, and 149-150 (SH) each bind substrate. S149 (phosphoserine intermediate) is an active-site residue. S149, D306, D308, and D310 together coordinate Mg(2+). S149 bears the Phosphoserine mark. Residues 310-311 (DR), T380, 404-406 (EEA), and K418 contribute to the substrate site.

This sequence belongs to the phosphohexose mutase family. Mg(2+) serves as cofactor.

Its subcellular location is the cytoplasm. The protein resides in the nucleus. The catalysed reaction is alpha-D-ribose 1-phosphate = D-ribose 5-phosphate. Converts ribose 1-phosphate to ribose 5-phosphate. Involved in ribose salvage via the pentose phosphate pathway. The protein is Probable phosphoribomutase of Schizosaccharomyces pombe (strain 972 / ATCC 24843) (Fission yeast).